We begin with the raw amino-acid sequence, 180 residues long: Putative pre-16S rRNA nuclease (180 aa).

Over residues 1-12 the composition is skewed to basic and acidic residues; that stretch reads MDAQERSERPDP. The disordered stretch occupies residues 1–23; it reads MDAQERSERPDPATDPGRGRRLG.

The protein belongs to the YqgF nuclease family.

It localises to the cytoplasm. Its function is as follows. Could be a nuclease involved in processing of the 5'-end of pre-16S rRNA. The chain is Putative pre-16S rRNA nuclease from Nocardia farcinica (strain IFM 10152).